The primary structure comprises 270 residues: Putative phosphoenolpyruvate synthase regulatory protein (270 aa).

Residue 150–157 participates in ADP binding; that stretch reads GVSRCGKT.

The protein belongs to the pyruvate, phosphate/water dikinase regulatory protein family. PSRP subfamily.

It carries out the reaction [pyruvate, water dikinase] + ADP = [pyruvate, water dikinase]-phosphate + AMP + H(+). The catalysed reaction is [pyruvate, water dikinase]-phosphate + phosphate + H(+) = [pyruvate, water dikinase] + diphosphate. In terms of biological role, bifunctional serine/threonine kinase and phosphorylase involved in the regulation of the phosphoenolpyruvate synthase (PEPS) by catalyzing its phosphorylation/dephosphorylation. The polypeptide is Putative phosphoenolpyruvate synthase regulatory protein (Shewanella frigidimarina (strain NCIMB 400)).